A 342-amino-acid polypeptide reads, in one-letter code: Probable transposase for insertion-like sequence element IS1161 (342 aa).

The region spanning 182-342 is the Integrase catalytic domain; the sequence is IEERPEEINN…KKLFELTQTA (161 aa).

Belongs to the transposase IS30 family.

In terms of biological role, required for the transposition of the insertion element. The protein is Probable transposase for insertion-like sequence element IS1161 of Streptococcus salivarius.